Reading from the N-terminus, the 102-residue chain is Monothiol glutaredoxin-S4 (102 aa).

The Glutaredoxin domain maps to 1–101; that stretch reads MDKLQKMISE…PMLKRVGALW (101 aa). Cysteine 21 contacts [2Fe-2S] cluster. A Responsive for interaction with TGA factors motif is present at residues 99 to 102; it reads ALWL.

The protein belongs to the glutaredoxin family. CC-type subfamily.

Its subcellular location is the cytoplasm. It localises to the nucleus. May only reduce GSH-thiol disulfides, but not protein disulfides. The sequence is that of Monothiol glutaredoxin-S4 (GRXS4) from Arabidopsis thaliana (Mouse-ear cress).